Reading from the N-terminus, the 288-residue chain is Phosphatidylserine decarboxylase proenzyme (288 aa).

Residues aspartate 90, histidine 147, and serine 252 each act as charge relay system; for autoendoproteolytic cleavage activity in the active site. Serine 252 acts as the Schiff-base intermediate with substrate; via pyruvic acid; for decarboxylase activity in catalysis. Serine 252 bears the Pyruvic acid (Ser); by autocatalysis mark.

This sequence belongs to the phosphatidylserine decarboxylase family. PSD-B subfamily. Prokaryotic type I sub-subfamily. As to quaternary structure, heterodimer of a large membrane-associated beta subunit and a small pyruvoyl-containing alpha subunit. It depends on pyruvate as a cofactor. In terms of processing, is synthesized initially as an inactive proenzyme. Formation of the active enzyme involves a self-maturation process in which the active site pyruvoyl group is generated from an internal serine residue via an autocatalytic post-translational modification. Two non-identical subunits are generated from the proenzyme in this reaction, and the pyruvate is formed at the N-terminus of the alpha chain, which is derived from the carboxyl end of the proenzyme. The autoendoproteolytic cleavage occurs by a canonical serine protease mechanism, in which the side chain hydroxyl group of the serine supplies its oxygen atom to form the C-terminus of the beta chain, while the remainder of the serine residue undergoes an oxidative deamination to produce ammonia and the pyruvoyl prosthetic group on the alpha chain. During this reaction, the Ser that is part of the protease active site of the proenzyme becomes the pyruvoyl prosthetic group, which constitutes an essential element of the active site of the mature decarboxylase.

It is found in the cell membrane. It catalyses the reaction a 1,2-diacyl-sn-glycero-3-phospho-L-serine + H(+) = a 1,2-diacyl-sn-glycero-3-phosphoethanolamine + CO2. The protein operates within phospholipid metabolism; phosphatidylethanolamine biosynthesis; phosphatidylethanolamine from CDP-diacylglycerol: step 2/2. In terms of biological role, catalyzes the formation of phosphatidylethanolamine (PtdEtn) from phosphatidylserine (PtdSer). This Pseudomonas fluorescens (strain ATCC BAA-477 / NRRL B-23932 / Pf-5) protein is Phosphatidylserine decarboxylase proenzyme.